The primary structure comprises 229 residues: Enolase-phosphatase E1 (229 aa).

Polar residues predominate over residues 208–218 (DTQSTHRQVSS). The interval 208 to 229 (DTQSTHRQVSSFDDIHPEQIPT) is disordered. The span at 220–229 (DDIHPEQIPT) shows a compositional bias: basic and acidic residues.

The protein belongs to the HAD-like hydrolase superfamily. MasA/MtnC family. As to quaternary structure, monomer. It depends on Mg(2+) as a cofactor.

The enzyme catalyses 5-methylsulfanyl-2,3-dioxopentyl phosphate + H2O = 1,2-dihydroxy-5-(methylsulfanyl)pent-1-en-3-one + phosphate. The protein operates within amino-acid biosynthesis; L-methionine biosynthesis via salvage pathway; L-methionine from S-methyl-5-thio-alpha-D-ribose 1-phosphate: step 3/6. Its pathway is amino-acid biosynthesis; L-methionine biosynthesis via salvage pathway; L-methionine from S-methyl-5-thio-alpha-D-ribose 1-phosphate: step 4/6. Its function is as follows. Bifunctional enzyme that catalyzes the enolization of 2,3-diketo-5-methylthiopentyl-1-phosphate (DK-MTP-1-P) into the intermediate 2-hydroxy-3-keto-5-methylthiopentenyl-1-phosphate (HK-MTPenyl-1-P), which is then dephosphorylated to form the acireductone 1,2-dihydroxy-3-keto-5-methylthiopentene (DHK-MTPene). This Cronobacter sakazakii (Enterobacter sakazakii) protein is Enolase-phosphatase E1.